The sequence spans 461 residues: V-type ATP synthase beta chain (461 aa).

The protein belongs to the ATPase alpha/beta chains family.

Functionally, produces ATP from ADP in the presence of a proton gradient across the membrane. The V-type beta chain is a regulatory subunit. The chain is V-type ATP synthase beta chain from Streptococcus pneumoniae serotype 19F (strain G54).